The following is a 269-amino-acid chain: Flagellar hook-basal body complex protein FlhP (269 aa).

The stretch at 7 to 65 forms a coiled coil; the sequence is TASTTLNQLQQQIDTISSNLSNSNTTGYKAKDTNFSELVRQQFDQVDEKNEEVAKARKT.

The protein belongs to the flagella basal body rod proteins family.

This is Flagellar hook-basal body complex protein FlhP (flhP) from Bacillus subtilis (strain 168).